The sequence spans 803 residues: Mastermind-like domain-containing protein 1 (803 aa).

4 disordered regions span residues 22 to 50 (NRQE…TGMA), 292 to 374 (LAAS…APSS), 420 to 452 (GHLI…QQSF), and 486 to 641 (QQQQ…PDQS). Positions 296–309 (KQGSATKQGSNRNW) are enriched in polar residues. The span at 312–340 (LPPPGLSPPYLPVPSPHPPPPQPPPPPFS) shows a compositional bias: pro residues. The span at 347–362 (SCMSSSSLSGSAVQSS) shows a compositional bias: low complexity. Polar residues-rich tracts occupy residues 363–374 (PNALLSSMAPSS), 441–452 (NLSSPGLPQQSF), 495–526 (HQAN…SSSP), and 547–564 (PSPQ…QSSL). Low complexity predominate over residues 571–588 (ATPAHAPSATASSTATAT). The segment covering 592 to 622 (QHHHQQHHHQQHHHQQQHHQQQHHQQHHHQQ) has biased composition (basic residues). The span at 623–641 (QQHQQQQHQQQQQQQPDQS) shows a compositional bias: low complexity.

It belongs to the mastermind family.

Its subcellular location is the nucleus. Its function is as follows. Transactivates the HES3 promoter independently of NOTCH proteins. HES3 is a non-canonical NOTCH target gene which lacks binding sites for RBPJ. Required for testosterone production. The chain is Mastermind-like domain-containing protein 1 (Mamld1) from Mus musculus (Mouse).